The sequence spans 557 residues: Glucose-6-phosphate isomerase (557 aa).

Glu361 (proton donor) is an active-site residue. Residues His392 and Lys520 contribute to the active site.

This sequence belongs to the GPI family.

Its subcellular location is the cytoplasm. The enzyme catalyses alpha-D-glucose 6-phosphate = beta-D-fructose 6-phosphate. Its pathway is carbohydrate biosynthesis; gluconeogenesis. It functions in the pathway carbohydrate degradation; glycolysis; D-glyceraldehyde 3-phosphate and glycerone phosphate from D-glucose: step 2/4. Functionally, catalyzes the reversible isomerization of glucose-6-phosphate to fructose-6-phosphate. This is Glucose-6-phosphate isomerase from Acinetobacter venetianus (strain ATCC 31012 / DSM 23050 / BCRC 14357 / CCUG 45561 / CIP 110063 / KCTC 2702 / LMG 19082 / RAG-1).